We begin with the raw amino-acid sequence, 1334 residues long: Aldehyde oxidase 1 (1334 aa).

One can recognise a 2Fe-2S ferredoxin-type domain in the interval 5–92 (PELLFYVNGR…GAAVTTVEGI (88 aa)). The [2Fe-2S] cluster site is built by Cys-44, Cys-49, Cys-52, and Cys-74. Gln-113 is a binding site for Mo-molybdopterin. 4 residues coordinate [2Fe-2S] cluster: Cys-114, Cys-117, Cys-149, and Cys-151. Cys-151 provides a ligand contact to Mo-molybdopterin. In terms of domain architecture, FAD-binding PCMH-type spans 236 to 421 (FSGERMMWIS…ASVHIPYSRK (186 aa)). Residues 264–271 (VVMGNTSV), Ala-345, Ser-354, His-358, Asp-367, and Leu-411 contribute to the FAD site. Mo-molybdopterin-binding positions include 802–803 (AF) and Met-1043. The residue at position 1064 (Ser-1064) is a Phosphoserine. Residues 1084–1087 (GSVV), Gln-1199, and Leu-1264 each bind Mo-molybdopterin. Glu-1266 functions as the Proton acceptor; for azaheterocycle hydroxylase activity in the catalytic mechanism.

It belongs to the xanthine dehydrogenase family. In terms of assembly, homodimer. Requires [2Fe-2S] cluster as cofactor. The cofactor is FAD. Mo-molybdopterin is required as a cofactor. The N-terminus is blocked. In terms of tissue distribution, very high expression in liver and lung. High expression in kidney, pancreas, brain stem and spinal cord. Moderate expression in heart, testis, eye, cerebral cortex and cerebellum. Low expression in stomach and muscle.

It is found in the cytoplasm. The enzyme catalyses an aldehyde + O2 + H2O = a carboxylate + H2O2 + H(+). The catalysed reaction is retinal + O2 + H2O = retinoate + H2O2 + H(+). It catalyses the reaction all-trans-retinal + O2 + H2O = all-trans-retinoate + H2O2 + H(+). With respect to regulation, inhibited by hydralazine and menadione. Not inhibited by BOF-4272 or allopurinol, xanthine dehydrogenase potent inhibitors. In contrast to guinea pig, human and rat, isovanillin is not an inhibitor but a substrate for AOX1 in rabbit. Oxidase with broad substrate specificity, oxidizing aromatic azaheterocycles, such as N1-methylnicotinamide, N-methylphthalazinium and phthalazine, as well as aldehydes, such as benzaldehyde, retinal, pyridoxal, and vanillin. Plays a key role in the metabolism of xenobiotics and drugs containing aromatic azaheterocyclic substituents. Participates in the bioactivation of prodrugs such as famciclovir, catalyzing the oxidation step from 6-deoxypenciclovir to penciclovir, which is a potent antiviral agent. Is probably involved in the regulation of reactive oxygen species homeostasis. May be a prominent source of superoxide generation via the one-electron reduction of molecular oxygen. May also catalyze nitric oxide (NO) production via the reduction of nitrite to NO with NADH or aldehyde as electron donor. May play a role in adipogenesis. Cannot use hypoxanthine and all-trans-retinol as substrate. This Oryctolagus cuniculus (Rabbit) protein is Aldehyde oxidase 1.